The sequence spans 665 residues: Pentatricopeptide repeat-containing protein At1g04840 (665 aa).

11 PPR repeats span residues 90–124 (NPFV…GVKP), 125–155 (DRLT…TLKN), 160–190 (DSFV…SPDR), 195–229 (SILI…NSGS), 230–256 (WSTL…MPEK), 257–291 (NVVS…GLKP), 292–326 (NEYT…GIKL), 327–357 (DRAI…MNHK), 358–392 (DILS…GEKP), 393–423 (DEVV…MRLD), and 429–459 (TLKH…MPIN). Positions 464–539 (TWAALYRACK…SLGWSYIELD (76 aa)) are type E motif. Residues 540 to 570 (GQLNKFSAGDYSHKLTQEIGLKLDEIISLAI) are type E(+) motif. The interval 571–665 (QKGYNPGADW…DGRCSCGDYW (95 aa)) is type DYW motif.

Belongs to the PPR family. PCMP-H subfamily.

In Arabidopsis thaliana (Mouse-ear cress), this protein is Pentatricopeptide repeat-containing protein At1g04840 (PCMP-H64).